We begin with the raw amino-acid sequence, 282 residues long: N-acetylaspartate synthetase (282 aa).

Residues 103–125 (FLTVMCYVMTKSFTLTFCAPFIL) form a helical membrane-spanning segment. The N-acetyltransferase domain occupies 110-269 (VMTKSFTLTF…RSPLERLFFQ (160 aa)).

Belongs to the NAT8 family.

It localises to the cytoplasm. The protein localises to the microsome membrane. Its subcellular location is the mitochondrion membrane. The protein resides in the endoplasmic reticulum membrane. It carries out the reaction L-aspartate + acetyl-CoA = N-acetyl-L-aspartate + CoA + H(+). Its function is as follows. Catalyzes the synthesis of N-acetylaspartate acid (NAA) from L-aspartate and acetyl-CoA. In Danio rerio (Zebrafish), this protein is N-acetylaspartate synthetase (nat8l).